Consider the following 38-residue polypeptide: Photosystem II reaction center protein X (38 aa).

The chain crosses the membrane as a helical span at residues isoleucine 9–isoleucine 29.

The protein belongs to the PsbX family. Type 1 subfamily. In terms of assembly, PSII is composed of 1 copy each of membrane proteins PsbA, PsbB, PsbC, PsbD, PsbE, PsbF, PsbH, PsbI, PsbJ, PsbK, PsbL, PsbM, PsbT, PsbX, PsbY, PsbZ, Psb30/Ycf12, at least 3 peripheral proteins of the oxygen-evolving complex and a large number of cofactors. It forms dimeric complexes.

The protein resides in the plastid. The protein localises to the chloroplast thylakoid membrane. Involved in the binding and/or turnover of quinones at the Q(B) site of photosystem II (PSII). PSII is a light-driven water plastoquinone oxidoreductase, using light energy to abstract electrons from H(2)O, generating a proton gradient subsequently used for ATP formation. The sequence is that of Photosystem II reaction center protein X from Phaeodactylum tricornutum (strain CCAP 1055/1).